The primary structure comprises 530 residues: White collar 2 protein (530 aa).

7 consecutive repeat copies span residues 9–12 (GSSM), 21–24 (GSGM), 25–28 (GSGM), 29–32 (GSGM), 33–36 (GTGM), 37–40 (GTGM), and 41–44 (GTGM). Residues 9–44 (GSSMYGFGAMGMGSGMGSGMGSGMGTGMGTGMGTGM) are 7 X 4 AA repeats of G-[SAT]-G-M. The segment at 134-158 (IATPTTTTSGPSGGPSSGGGSTLTE) is disordered. Residues 144–154 (PSGGPSSGGGS) are compositionally biased toward gly residues. Residues 162–232 (RRNWPAKVVE…AELNEAIATG (71 aa)) enclose the PAS domain. The interval 315 to 343 (REEQEEQEESHRTWRMSQEGRSDVTPSDD) is disordered. The GATA-type zinc-finger motif lies at 468 to 493 (CTDCGTLDSPEWRKGPSGPKTLCNAC). Residues 504 to 530 (KNANNNNNGGGIGGHNDIHTPMGDHMG) are disordered.

In terms of assembly, heterodimer of wc-1 and wc-2 (Potential). Binds to DNA.

The protein resides in the nucleus. In terms of biological role, may function as a transcription factor involved in light regulation. Binds and affects blue light regulation of the al-3 gene. Wc-1 and wc-2 interact via homologous PAS domains, bind to promoters of light regulated genes such as frq, and activate transcription. May bind directly to frq. The polypeptide is White collar 2 protein (wc-2) (Neurospora crassa (strain ATCC 24698 / 74-OR23-1A / CBS 708.71 / DSM 1257 / FGSC 987)).